The sequence spans 393 residues: Bone morphogenetic protein 2 (393 aa).

The signal sequence occupies residues 1 to 19; it reads MVAGTRCLLVLLLPQVLLG. Residues 20–279 constitute a propeptide, cleaved by PCSK5; it reads GAAGLIPELG…GHPLHKREKR (260 aa). Ser-85 is modified (phosphoserine). 3 N-linked (GlcNAc...) asparagine glycosylation sites follow: Asn-133, Asn-161, and Asn-197. The segment at 268 to 290 is disordered; that stretch reads GKGHPLHKREKRQAKHKQRKRLK. A compositionally biased stretch (basic residues) spans 271 to 290; that stretch reads HPLHKREKRQAKHKQRKRLK. 3 disulfide bridges follow: Cys-293-Cys-358, Cys-322-Cys-390, and Cys-326-Cys-392. A glycan (N-linked (GlcNAc...) asparagine) is linked at Asn-335.

Belongs to the TGF-beta family. Homodimer; disulfide-linked. Interacts with SOSTDC1. Interacts with GREM2, RGMA, RGMB and RGMC. Interacts with ASPN. Interacts with MAFP5. Interacts with FBN1 (via N-terminal domain) and FBN2. Interacts with type I receptor BMPR1A. Interacts with type II receptor BMPR2. Interacts with SCUBE3. Interacts with TNFAIP6 (primarily via Link domain); this interaction is inhibited by hyaluronan. Interacts with ERFE. Interacts with BMPR1A/ALK3; the interaction may induce HAMP expression. Forms heterodimers with BMP6 in vitro; the heterodimer then binds to its receptor BMPR1A /ALK3 and may induce HAMP expression. Interacts with TGFBR3. In terms of tissue distribution, expressed in femur, calvaria, trachea, lung and ovary.

Its subcellular location is the secreted. In terms of biological role, growth factor of the TGF-beta superfamily that plays essential roles in many developmental processes, including cardiogenesis, neurogenesis, and osteogenesis. Induces cartilage and bone formation. Initiates the canonical BMP signaling cascade by associating with type I receptor BMPR1A and type II receptor BMPR2. Once all three components are bound together in a complex at the cell surface, BMPR2 phosphorylates and activates BMPR1A. In turn, BMPR1A propagates signal by phosphorylating SMAD1/5/8 that travel to the nucleus and act as activators and repressors of transcription of target genes. Also acts to promote expression of HAMP, via the interaction with its receptor BMPR1A/ALK3. Can also signal through non-canonical pathways such as ERK/MAP kinase signaling cascade that regulates osteoblast differentiation. Also stimulates the differentiation of myoblasts into osteoblasts via the EIF2AK3-EIF2A-ATF4 pathway by stimulating EIF2A phosphorylation which leads to increased expression of ATF4 which plays a central role in osteoblast differentiation. Acts as a positive regulator of odontoblast differentiation during mesenchymal tooth germ formation, expression is repressed during the bell stage by MSX1-mediated inhibition of CTNNB1 signaling. The polypeptide is Bone morphogenetic protein 2 (Bmp2) (Rattus norvegicus (Rat)).